A 341-amino-acid polypeptide reads, in one-letter code: tRNA N6-adenosine threonylcarbamoyltransferase (341 aa).

Residues histidine 116 and histidine 120 each coordinate Fe cation. Residues 139–143 (LVSGG), aspartate 172, glycine 185, and asparagine 274 each bind substrate. Aspartate 302 contributes to the Fe cation binding site.

Belongs to the KAE1 / TsaD family. The cofactor is Fe(2+).

The protein localises to the cytoplasm. It carries out the reaction L-threonylcarbamoyladenylate + adenosine(37) in tRNA = N(6)-L-threonylcarbamoyladenosine(37) in tRNA + AMP + H(+). Required for the formation of a threonylcarbamoyl group on adenosine at position 37 (t(6)A37) in tRNAs that read codons beginning with adenine. Is involved in the transfer of the threonylcarbamoyl moiety of threonylcarbamoyl-AMP (TC-AMP) to the N6 group of A37, together with TsaE and TsaB. TsaD likely plays a direct catalytic role in this reaction. The protein is tRNA N6-adenosine threonylcarbamoyltransferase of Vesicomyosocius okutanii subsp. Calyptogena okutanii (strain HA).